A 92-amino-acid polypeptide reads, in one-letter code: uncharacterized protein (92 aa).

This sequence belongs to the IUNH family.

This is an uncharacterized protein from Corynebacterium ammoniagenes (Brevibacterium ammoniagenes).